The primary structure comprises 135 residues: RxLR effector protein PITG_02860 (135 aa).

A signal peptide spans 1–18; it reads MRLAFLLLAVSHFICGNA. The short motif at 48-64 is the RxLR-dEER element; it reads RKLLRTDERLSEANEER. Positions 126 to 135 are NRL1-binding domain; the sequence is LKDPQAFRGP.

It belongs to the RxLR effector family. In terms of assembly, interacts with host ubiquitin E3 ligase NRL1.

Its subcellular location is the secreted. The protein resides in the host cytoplasm. The protein localises to the host nucleus. It is found in the host nucleoplasm. Its function is as follows. Effector that promotes P.infestans virulence and suppresses pattern-triggered immunity (PTI). Interacts with the host ubiquitin E3 ligase NRL1 and enhances the association between NRL1 and SWAP70 to promote proteasome-mediated degradation of SWAP70, which results in the suppression of immunity. The sequence is that of RxLR effector protein PITG_02860 from Phytophthora infestans (strain T30-4) (Potato late blight agent).